Consider the following 452-residue polypeptide: Pup--protein ligase (452 aa).

Glu9 is a binding site for Mg(2+). Arg53 serves as a coordination point for ATP. Residue Tyr55 coordinates Mg(2+). Catalysis depends on Asp57, which acts as the Proton acceptor. Residue Glu63 coordinates Mg(2+). ATP-binding residues include Thr66 and Trp419.

It belongs to the Pup ligase/Pup deamidase family. Pup-conjugating enzyme subfamily.

The enzyme catalyses ATP + [prokaryotic ubiquitin-like protein]-L-glutamate + [protein]-L-lysine = ADP + phosphate + N(6)-([prokaryotic ubiquitin-like protein]-gamma-L-glutamyl)-[protein]-L-lysine.. It functions in the pathway protein degradation; proteasomal Pup-dependent pathway. The protein operates within protein modification; protein pupylation. Functionally, catalyzes the covalent attachment of the prokaryotic ubiquitin-like protein modifier Pup to the proteasomal substrate proteins, thereby targeting them for proteasomal degradation. This tagging system is termed pupylation. The ligation reaction involves the side-chain carboxylate of the C-terminal glutamate of Pup and the side-chain amino group of a substrate lysine. The polypeptide is Pup--protein ligase (Actinosynnema mirum (strain ATCC 29888 / DSM 43827 / JCM 3225 / NBRC 14064 / NCIMB 13271 / NRRL B-12336 / IMRU 3971 / 101)).